A 214-amino-acid polypeptide reads, in one-letter code: MQHNKILIRQLGLQPYEPVSQAMHEFTDARDEDTLDEIWLVEHHPVFTQGQAGKAEHVLVPGDIPVIQSDRGGQVTYHGPGQQVMYVLLDLKRRKLGVRELVTLLEQTVVNTLAEYSIESHPRADAPGVYVGERKICSLGLRIRKGCSFHGLALNIAMDLTPFLRINPCGYAGMEMTQMRQWQPAASPETVAPRLVANLLALLNHPPHEYLPRD.

Residues 32–207 (EDTLDEIWLV…NLLALLNHPP (176 aa)) form the BPL/LPL catalytic domain. Substrate contacts are provided by residues 71–78 (RGGQVTYH), 138–140 (SLG), and 151–153 (GLA). Residue Cys-169 is the Acyl-thioester intermediate of the active site.

It belongs to the LipB family.

The protein localises to the cytoplasm. It carries out the reaction octanoyl-[ACP] + L-lysyl-[protein] = N(6)-octanoyl-L-lysyl-[protein] + holo-[ACP] + H(+). The protein operates within protein modification; protein lipoylation via endogenous pathway; protein N(6)-(lipoyl)lysine from octanoyl-[acyl-carrier-protein]: step 1/2. In terms of biological role, catalyzes the transfer of endogenously produced octanoic acid from octanoyl-acyl-carrier-protein onto the lipoyl domains of lipoate-dependent enzymes. Lipoyl-ACP can also act as a substrate although octanoyl-ACP is likely to be the physiological substrate. The protein is Octanoyltransferase of Klebsiella pneumoniae subsp. pneumoniae (strain ATCC 700721 / MGH 78578).